The following is a 161-amino-acid chain: Extracellular giant hemoglobin major globin subunit B1 (161 aa).

Positions 1–16 (MTILVLFLSCAALASA) are cleaved as a signal peptide. The 144-residue stretch at 18-161 (CCSRGDAEVV…YIAAGIGAGL (144 aa)) folds into the Globin domain. C19 and C149 form a disulfide bridge. H112 is a binding site for heme b.

The protein belongs to the globin family. The 400 kDa hemoglobin consists of a spherical 24-mer arranged as a double layer of dome-shaped dodecamers. Each dodecamer is composed of the 3-fold trimer of the tetramer A1-A2-B1-B2 having one intra-tetramer (A1-B2) disulfide bond and one inter-tetramer (B1-B2) disulfide bond per tetramer.

It is found in the secreted. Functionally, the extracellular giant hemoglobin is able to bind and transport oxygen and sulfide simultaneously and reversibly at two different sites. This chain is Extracellular giant hemoglobin major globin subunit B1 (ghbB1), found in Oligobrachia mashikoi (Beard worm).